The following is a 433-amino-acid chain: Protein CLP1 homolog (433 aa).

ATP is bound by residues Glu-22, Arg-61, and 128–133 (DVGKTT).

Belongs to the Clp1 family. Clp1 subfamily.

The protein resides in the nucleus. In terms of biological role, required for endonucleolytic cleavage during polyadenylation-dependent pre-mRNA 3'-end formation. The protein is Protein CLP1 homolog of Brugia malayi (Filarial nematode worm).